The chain runs to 291 residues: ATP synthase gamma chain (291 aa).

This sequence belongs to the ATPase gamma chain family. As to quaternary structure, F-type ATPases have 2 components, CF(1) - the catalytic core - and CF(0) - the membrane proton channel. CF(1) has five subunits: alpha(3), beta(3), gamma(1), delta(1), epsilon(1). CF(0) has three main subunits: a, b and c.

It localises to the cell inner membrane. In terms of biological role, produces ATP from ADP in the presence of a proton gradient across the membrane. The gamma chain is believed to be important in regulating ATPase activity and the flow of protons through the CF(0) complex. This chain is ATP synthase gamma chain, found in Cupriavidus metallidurans (strain ATCC 43123 / DSM 2839 / NBRC 102507 / CH34) (Ralstonia metallidurans).